We begin with the raw amino-acid sequence, 351 residues long: UPF0421 protein BC_2748 (351 aa).

Transmembrane regions (helical) follow at residues 19-39, 74-94, 109-129, and 131-151; these read IAVFLTVLVCDFFNIPTIFAV, FTFFLGHQAISYALAAMFTIV, TLTAVAMIPITANHYFTAFLI, and LATTSTGIIVSTLVNFFIFPP.

It belongs to the UPF0421 family.

The protein resides in the cell membrane. The protein is UPF0421 protein BC_2748 of Bacillus cereus (strain ATCC 14579 / DSM 31 / CCUG 7414 / JCM 2152 / NBRC 15305 / NCIMB 9373 / NCTC 2599 / NRRL B-3711).